Reading from the N-terminus, the 566-residue chain is Urease subunit alpha (566 aa).

Residues 128 to 566 form the Urease domain; sequence GGIDTHIHWI…LPMAQRYFLF (439 aa). Ni(2+) contacts are provided by H133, H135, and K216. Residue K216 is modified to N6-carboxylysine. Residue H218 participates in substrate binding. Ni(2+)-binding residues include H245 and H271. The active-site Proton donor is the H319. D359 lines the Ni(2+) pocket.

The protein belongs to the metallo-dependent hydrolases superfamily. Urease alpha subunit family. In terms of assembly, heterotrimer of UreA (gamma), UreB (beta) and UreC (alpha) subunits. Three heterotrimers associate to form the active enzyme. Ni cation serves as cofactor. Post-translationally, carboxylation allows a single lysine to coordinate two nickel ions.

It is found in the cytoplasm. The catalysed reaction is urea + 2 H2O + H(+) = hydrogencarbonate + 2 NH4(+). Its pathway is nitrogen metabolism; urea degradation; CO(2) and NH(3) from urea (urease route): step 1/1. The protein is Urease subunit alpha of Acinetobacter baylyi (strain ATCC 33305 / BD413 / ADP1).